A 312-amino-acid polypeptide reads, in one-letter code: Tumor necrosis factor receptor type 1-associated DEATH domain protein (312 aa).

The Nuclear export signal signature appears at 147–163 (LRDEELTELENALRNLT). Positions 166 to 200 (SAGGQGSDVQGTPAPLQSLAPSPPEEKPPPPQPGQ) are disordered. A Death domain is found at 215 to 305 (NLQDQQKFAR…SLAEDLLGLA (91 aa)). Positions 222–289 (FARSVGLKWR…ATLQRLVEAL (68 aa)) are interaction with KRT14 and KRT18. The Nuclear localization signal signature appears at 231 to 244 (RKVGRSLQRSCRAL).

As to quaternary structure, stimulation of TNF-alpha receptor TNFRSF1A leads to the formation of two distinct signaling complexes. Plasma membrane-bound complex I is composed of TNFRSF1A, TRADD, RIPK1, TRAF2 and BIRC2/c-IAP1 or BIRC3 which interacts with CHUCK/IKK-alpha, IKBKB/IKK-beta and IKBKG/IKK-gamma promoting cell survival. Subsequently, TRADD, RIPK1 and TRAF2 dissociate from TNFRSF1A and form cytoplasmic complex II with FADD and caspase CASP8 promoting cell apoptosis. Within complex I, interacts with TNFRSF1A/TNFR1, TRAF2 and kinase RIPK1. Within complex I, interacts with TRPC4AP; the interaction promotes NF-kappa B activation. UXT1 associates with complex I; the interaction prevents the formation of complex II. Within complex I Interacts with scaffold protein DAB2IP. Interacts with autophagy receptor SQSTM1. Interacts with E3 ligase TRIP12. Interacts with kinase HIPK2. Interacts with keratin KRT14. Interacts with keratin KRT18. Interacts with keratins KRT16 and KRT17. Interacts with FADD. Interacts with TOMM70. Interacts with TMC8; the interaction impairs the formation of complex I and facilites complex II formation.

The protein localises to the nucleus. It localises to the cytoplasm. Its subcellular location is the cytoskeleton. Functionally, adapter molecule for TNFRSF1A/TNFR1 that specifically associates with the cytoplasmic domain of activated TNFRSF1A/TNFR1 mediating its interaction with FADD. Overexpression of TRADD leads to two major TNF-induced responses, apoptosis and activation of NF-kappa-B. The nuclear form acts as a tumor suppressor by preventing ubiquitination and degradation of isoform p19ARF/ARF of CDKN2A by TRIP12: acts by interacting with TRIP12, leading to disrupt interaction between TRIP12 and isoform p19ARF/ARF of CDKN2A. This is Tumor necrosis factor receptor type 1-associated DEATH domain protein from Bos taurus (Bovine).